The chain runs to 104 residues: Large ribosomal subunit protein bL21 (104 aa).

Belongs to the bacterial ribosomal protein bL21 family. As to quaternary structure, part of the 50S ribosomal subunit. Contacts protein L20.

Functionally, this protein binds to 23S rRNA in the presence of protein L20. This Kosmotoga olearia (strain ATCC BAA-1733 / DSM 21960 / TBF 19.5.1) protein is Large ribosomal subunit protein bL21.